A 167-amino-acid chain; its full sequence is MHCVPLFCFLWFCHHLYYSQAVPIRKVQDDTKTLTKTIITRINDISHMYSISAKQRVTGLDFIPGLHPFQSLSDMDQTLAIYQQILSNLSSRNMVQISNDLENLRDLLHLLGSLKSCPFDEAGGLSALGNLEGVMEASLYSTEVVTLTRLQKSLYVMLQQLDLIHGC.

The first 21 residues, 1–21 (MHCVPLFCFLWFCHHLYYSQA), serve as a signal peptide directing secretion. The cysteines at positions 117 and 167 are disulfide-linked.

Belongs to the leptin family.

Its subcellular location is the secreted. Functionally, key player in the regulation of energy balance and body weight control. Once released into the circulation, has central and peripheral effects by binding LEPR, found in many tissues, which results in the activation of several major signaling pathways. In the hypothalamus, acts as an appetite-regulating factor that induces a decrease in food intake and an increase in energy consumption by inducing anorexinogenic factors and suppressing orexigenic neuropeptides, also regulates bone mass and secretion of hypothalamo-pituitary-adrenal hormones. In the periphery, increases basal metabolism, influences reproductive function, regulates pancreatic beta-cell function and insulin secretion, is pro-angiogenic for endothelial cell and affects innate and adaptive immunity. In the arcuate nucleus of the hypothalamus, activates by depolarization POMC neurons inducing FOS and SOCS3 expression to release anorexigenic peptides and inhibits by hyperpolarization NPY neurons inducing SOCS3 with a consequent reduction on release of orexigenic peptides. In addition to its known satiety inducing effect, has a modulatory role in nutrient absorption. In the intestine, reduces glucose absorption by enterocytes by activating PKC and leading to a sequential activation of p38, PI3K and ERK signaling pathways which exerts an inhibitory effect on glucose absorption. Acts as a growth factor on certain tissues, through the activation of different signaling pathways increases expression of genes involved in cell cycle regulation such as CCND1, via JAK2-STAT3 pathway, or VEGFA, via MAPK1/3 and PI3K-AKT1 pathways. May also play an apoptotic role via JAK2-STAT3 pathway and up-regulation of BIRC5 expression. Pro-angiogenic, has mitogenic activity on vascular endothelial cells and plays a role in matrix remodeling by regulating the expression of matrix metalloproteinases (MMPs) and tissue inhibitors of metalloproteinases (TIMPs). In innate immunity, modulates the activity and function of neutrophils by increasing chemotaxis and the secretion of oxygen radicals. Increases phagocytosis by macrophages and enhances secretion of pro-inflammatory mediators. Increases cytotoxic ability of NK cells. Plays a pro-inflammatory role, in synergy with IL1B, by inducing NOS2 which promotes the production of IL6, IL8 and Prostaglandin E2, through a signaling pathway that involves JAK2, PI3K, MAP2K1/MEK1 and MAPK14/p38. In adaptive immunity, promotes the switch of memory T-cells towards T helper-1 cell immune responses. Increases CD4(+)CD25(-) T-cell proliferation and reduces autophagy during TCR (T-cell receptor) stimulation, through MTOR signaling pathway activation and BCL2 up-regulation. This Sminthopsis crassicaudata (Fat-tailed dunnart) protein is Leptin (LEP).